The sequence spans 438 residues: Myosin light chain kinase, smooth muscle (438 aa).

Residues 1-241 (FRLVEKKTGK…CTQCLQHPWL (241 aa)) form the Protein kinase domain. Residue Lys15 participates in ATP binding. Tyr97 carries the phosphotyrosine; by ABL1 modification. Asp107 functions as the Proton acceptor in the catalytic mechanism. Residue Tyr157 is modified to Phosphotyrosine; by ABL1. The interval 233–296 (TQCLQHPWLX…SGLSGRKSST (64 aa)) is calmodulin-binding. Phosphoserine occurs at positions 281, 282, 294, 295, and 298. Positions 283-438 (MAMISGLSGR…GEGGEEEEEE (156 aa)) are telokin. The tract at residues 289 to 309 (LSGRKSSTGSPTSPLNAEKLE) is disordered. Over residues 292 to 303 (RKSSTGSPTSPL) the composition is skewed to polar residues. Thr300 carries the post-translational modification Phosphothreonine. Ser301 is subject to Phosphoserine. The Ig-like C2-type domain maps to 331–420 (PYFSKTIRDL…GEATCTAELI (90 aa)). The cysteines at positions 352 and 404 are disulfide-linked.

It belongs to the protein kinase superfamily. CAMK Ser/Thr protein kinase family. In terms of assembly, all isoforms including Telokin bind calmodulin. Interacts with SVIL. Interacts with CTTN; this interaction is reduced during thrombin-induced endothelial cell (EC) contraction but is promoted by the barrier-protective agonist sphingosine 1-phosphate (S1P) within lamellipodia. A complex made of ABL1, CTTN and MYLK regulates cortical actin-based cytoskeletal rearrangement critical to sphingosine 1-phosphate (S1P)-mediated endothelial cell (EC) barrier enhancement. Binds to NAA10/ARD1 and PTK2B/PYK2. Mg(2+) serves as cofactor. It depends on Ca(2+) as a cofactor. The C-terminus is deglutamylated by AGTPBP1/CCP1, AGBL1/CCP4 and AGBL4/CCP6, leading to the formation of Myosin light chain kinase, smooth muscle, deglutamylated form. The consequences of C-terminal deglutamylation are unknown. In terms of processing, can probably be down-regulated by phosphorylation. Tyrosine phosphorylation by ABL1 increases kinase activity, reverses MLCK-mediated inhibition of Arp2/3-mediated actin polymerization, and enhances CTTN-binding. Phosphorylation by SRC promotes CTTN binding.

It localises to the cytoplasm. Its subcellular location is the cell projection. The protein resides in the lamellipodium. The protein localises to the cleavage furrow. It is found in the cytoskeleton. It localises to the stress fiber. The catalysed reaction is L-seryl-[myosin light chain] + ATP = O-phospho-L-seryl-[myosin light chain] + ADP + H(+). The enzyme catalyses L-threonyl-[myosin light chain] + ATP = O-phospho-L-threonyl-[myosin light chain] + ADP + H(+). Its function is as follows. Calcium/calmodulin-dependent myosin light chain kinase implicated in smooth muscle contraction via phosphorylation of myosin light chains (MLC). Also regulates actin-myosin interaction through a non-kinase activity. Phosphorylates PTK2B/PYK2 and myosin light-chains. Involved in the inflammatory response (e.g. apoptosis, vascular permeability, leukocyte diapedesis), cell motility and morphology, airway hyperreactivity and other activities relevant to asthma. Required for tonic airway smooth muscle contraction that is necessary for physiological and asthmatic airway resistance. Necessary for gastrointestinal motility. Implicated in the regulation of endothelial as well as vascular permeability, probably via the regulation of cytoskeletal rearrangements. In the nervous system it has been shown to control the growth initiation of astrocytic processes in culture and to participate in transmitter release at synapses formed between cultured sympathetic ganglion cells. Critical participant in signaling sequences that result in fibroblast apoptosis. Plays a role in the regulation of epithelial cell survival. Required for epithelial wound healing, especially during actomyosin ring contraction during purse-string wound closure. Mediates RhoA-dependent membrane blebbing. Triggers TRPC5 channel activity in a calcium-dependent signaling, by inducing its subcellular localization at the plasma membrane. Promotes cell migration (including tumor cells) and tumor metastasis. PTK2B/PYK2 activation by phosphorylation mediates ITGB2 activation and is thus essential to trigger neutrophil transmigration during acute lung injury (ALI). May regulate optic nerve head astrocyte migration. Probably involved in mitotic cytoskeletal regulation. Regulates tight junction probably by modulating ZO-1 exchange in the perijunctional actomyosin ring. Mediates burn-induced microvascular barrier injury; triggers endothelial contraction in the development of microvascular hyperpermeability by phosphorylating MLC. Essential for intestinal barrier dysfunction. Mediates Giardia spp.-mediated reduced epithelial barrier function during giardiasis intestinal infection via reorganization of cytoskeletal F-actin and tight junctional ZO-1. Necessary for hypotonicity-induced Ca(2+) entry and subsequent activation of volume-sensitive organic osmolyte/anion channels (VSOAC) in cervical cancer cells. The chain is Myosin light chain kinase, smooth muscle (MYLK) from Ovis aries (Sheep).